Reading from the N-terminus, the 71-residue chain is uncharacterized protein (71 aa).

Residues 12 to 32 form a helical membrane-spanning segment; the sequence is FLVSIAFFGLAPTIPLLAIAL.

The protein resides in the membrane. This is an uncharacterized protein from Sinorhizobium fredii (strain NBRC 101917 / NGR234).